We begin with the raw amino-acid sequence, 295 residues long: Protoheme IX farnesyltransferase (295 aa).

9 helical membrane passes run 8 to 28 (VTKPGIIFGNLISVIGGFLLA), 35 to 55 (YPLFLSTLLGVSLVVASGCVF), 74 to 94 (VLVKGLIDPKVSLIYASVLGI), 98 to 118 (LLLYVAANALAMMLAVIGFVI), 132 to 152 (VYGTLIGSLSGAAPPVIGYCA), 162 to 182 (LILLLIFSLWQMPHSYAIAIF), 208 to 228 (ITLYILAFMVATLMLTLSGYA), 233 to 253 (LVVAAAVSVWWLGMALRGYKA), and 264 to 284 (FVFSIIAITSLSVMMSVDFNV).

This sequence belongs to the UbiA prenyltransferase family. Protoheme IX farnesyltransferase subfamily.

Its subcellular location is the cell inner membrane. The catalysed reaction is heme b + (2E,6E)-farnesyl diphosphate + H2O = Fe(II)-heme o + diphosphate. The protein operates within porphyrin-containing compound metabolism; heme O biosynthesis; heme O from protoheme: step 1/1. Functionally, converts heme B (protoheme IX) to heme O by substitution of the vinyl group on carbon 2 of heme B porphyrin ring with a hydroxyethyl farnesyl side group. The chain is Protoheme IX farnesyltransferase from Yersinia pseudotuberculosis serotype O:1b (strain IP 31758).